A 138-amino-acid chain; its full sequence is ATP synthase epsilon chain (138 aa).

Belongs to the ATPase epsilon chain family. As to quaternary structure, F-type ATPases have 2 components, CF(1) - the catalytic core - and CF(0) - the membrane proton channel. CF(1) has five subunits: alpha(3), beta(3), gamma(1), delta(1), epsilon(1). CF(0) has three main subunits: a, b and c.

The protein localises to the cell inner membrane. Functionally, produces ATP from ADP in the presence of a proton gradient across the membrane. The polypeptide is ATP synthase epsilon chain (Blochmanniella floridana).